Here is a 350-residue protein sequence, read N- to C-terminus: Protein-glutamate methylesterase/protein-glutamine glutaminase 1 (350 aa).

The 118-residue stretch at 6–123 (RVLVVDDSAL…GRSVENYAEE (118 aa)) folds into the Response regulatory domain. A 4-aspartylphosphate modification is found at aspartate 57. The CheB-type methylesterase domain occupies 159 to 350 (LGASGKIIFV…ARRVLGAVSA (192 aa)). Active-site residues include serine 171, histidine 197, and aspartate 293.

Belongs to the CheB family. Phosphorylated by CheA. Phosphorylation of the N-terminal regulatory domain activates the methylesterase activity.

The protein resides in the cytoplasm. The catalysed reaction is [protein]-L-glutamate 5-O-methyl ester + H2O = L-glutamyl-[protein] + methanol + H(+). It catalyses the reaction L-glutaminyl-[protein] + H2O = L-glutamyl-[protein] + NH4(+). Involved in chemotaxis. Part of a chemotaxis signal transduction system that modulates chemotaxis in response to various stimuli. Catalyzes the demethylation of specific methylglutamate residues introduced into the chemoreceptors (methyl-accepting chemotaxis proteins or MCP) by CheR. Also mediates the irreversible deamidation of specific glutamine residues to glutamic acid. The protein is Protein-glutamate methylesterase/protein-glutamine glutaminase 1 of Dechloromonas aromatica (strain RCB).